The following is a 191-amino-acid chain: General negative regulator of transcription subunit 2 (191 aa).

Belongs to the CNOT2/3/5 family. In terms of assembly, forms a NOT protein complex that comprises NOT1, NOT2, NOT3, NOT4 and NOT5. Subunit of the 1.0 MDa CCR4-NOT core complex that contains CCR4, CAF1, NOT1, NOT2, NOT3, NOT4, NOT5, CAF40 and CAF130. In the complex interacts with NOT1 and NOT5. The core complex probably is part of a less characterized 1.9 MDa CCR4-NOT complex.

The protein localises to the cytoplasm. It localises to the nucleus. Its function is as follows. Acts as a component of the CCR4-NOT core complex, which in the nucleus seems to be a general transcription factor, and in the cytoplasm the major mRNA deadenylase involved in mRNA turnover. NOT2 is required for the integrity of the complex. The NOT protein subcomplex negatively regulates the basal and activated transcription of many genes. Preferentially affects TC-type TATA element-dependent transcription. Could directly or indirectly inhibit component(s) of the general transcription machinery. In Saccharomyces cerevisiae (strain ATCC 204508 / S288c) (Baker's yeast), this protein is General negative regulator of transcription subunit 2 (CDC36).